The chain runs to 257 residues: Envelope glycoprotein (257 aa).

At 1-229 (FPILPGVWVD…EWAIHLLKGL (229 aa)) the chain is on the extracellular side. N15, N58, and N68 each carry an N-linked (GlcNAc...) asparagine; by host glycan. Positions 95 to 115 (GPTARIFASILAPGVAAAQAL) are fusion peptide. A coiled-coil region spans residues 112-162 (AQALREIERLACWSVKQANLTTSLLGDLLDDVTSIRHAVLQNRAAIDFLLL). An N-linked (GlcNAc...) asparagine; by host glycan is attached at N130. The interval 151 to 167 (LQNRAAIDFLLLAHGHG) is immunosuppression. Residue N178 is glycosylated (N-linked (GlcNAc...) asparagine; by host). Residues 180–210 (SDHSEAIQKKFQLMKEHVNKIGVDSDPIGSW) adopt a coiled-coil conformation. A helical transmembrane segment spans residues 230 to 250 (LLGLVVILLLVVCLPCLLQFV). The S-palmitoyl cysteine; by host moiety is linked to residue C245. At 251-257 (SSSTRKM) the chain is on the cytoplasmic side.

The mature envelope protein (Env) consists of a trimer of SU-TM heterodimers attached by noncovalent interactions or by a labile interchain disulfide bond. In terms of processing, specific enzymatic cleavages in vivo yield mature proteins. Envelope glycoproteins are synthesized as an inactive precursor that is N-glycosylated and processed likely by host cell furin or by a furin-like protease in the Golgi to yield the mature SU and TM proteins. The cleavage site between SU and TM requires the minimal sequence [KR]-X-[KR]-R. The transmembrane protein is palmitoylated.

It is found in the virion membrane. Its subcellular location is the host cell membrane. In terms of biological role, the surface protein (SU) attaches the virus to the host cell by binding to its receptor. This interaction triggers the refolding of the transmembrane protein (TM) and is thought to activate its fusogenic potential by unmasking its fusion peptide. Fusion occurs at the host cell plasma membrane. The transmembrane protein (TM) acts as a class I viral fusion protein. Under the current model, the protein has at least 3 conformational states: pre-fusion native state, pre-hairpin intermediate state, and post-fusion hairpin state. During viral and target cell membrane fusion, the coiled coil regions (heptad repeats) assume a trimer-of-hairpins structure, positioning the fusion peptide in close proximity to the C-terminal region of the ectodomain. The formation of this structure appears to drive apposition and subsequent fusion of viral and target cell membranes. Membranes fusion leads to delivery of the nucleocapsid into the cytoplasm. The sequence is that of Envelope glycoprotein (env) from Galliformes.